A 628-amino-acid chain; its full sequence is DNA mismatch repair protein MutL (628 aa).

The segment at 350 to 402 (GLPFDVSESQGNDNHINNGKSRETKSERELYERRPNPFENRLMKESNSPSVGK) is disordered. Positions 356 to 368 (SESQGNDNHINNG) are enriched in polar residues. Residues 369-393 (KSRETKSERELYERRPNPFENRLMK) show a composition bias toward basic and acidic residues.

The protein belongs to the DNA mismatch repair MutL/HexB family.

In terms of biological role, this protein is involved in the repair of mismatches in DNA. It is required for dam-dependent methyl-directed DNA mismatch repair. May act as a 'molecular matchmaker', a protein that promotes the formation of a stable complex between two or more DNA-binding proteins in an ATP-dependent manner without itself being part of a final effector complex. The sequence is that of DNA mismatch repair protein MutL from Wolbachia sp. subsp. Brugia malayi (strain TRS).